Here is a 640-residue protein sequence, read N- to C-terminus: Threonine--tRNA ligase (640 aa).

The TGS domain maps to Met1 to Thr61. Residues Asp242–Pro533 form a catalytic region. The Zn(2+) site is built by Cys333, His384, and His510.

Belongs to the class-II aminoacyl-tRNA synthetase family. In terms of assembly, homodimer. It depends on Zn(2+) as a cofactor.

It localises to the cytoplasm. It catalyses the reaction tRNA(Thr) + L-threonine + ATP = L-threonyl-tRNA(Thr) + AMP + diphosphate + H(+). In terms of biological role, catalyzes the attachment of threonine to tRNA(Thr) in a two-step reaction: L-threonine is first activated by ATP to form Thr-AMP and then transferred to the acceptor end of tRNA(Thr). Also edits incorrectly charged L-seryl-tRNA(Thr). The polypeptide is Threonine--tRNA ligase (Pseudomonas putida (strain ATCC 47054 / DSM 6125 / CFBP 8728 / NCIMB 11950 / KT2440)).